The sequence spans 330 residues: MYVFNFYPIPRKSINFRSDVDDLGFLRPWSPQEESGCKKQYEAWYSSYLPIVVRRRCRWEKENPRRNSHLLQRFVRKGIPHTFRKELWLRSCPSRADGVWQRHEVPDEVIKQIKLDLPRTFPDNKFLKTEGTRKTLGRALFAVAEHIPSVGYCQGLNFVAGVILLVVNDESRAIDLLVHLVSQRQEYYGKNMIGLRRDMHVLHSLLREHCPRVVVTLEKLDVGLDMLVGKWFVCWFVESLPMETVLRLWDCLIYEGDEWLFRIAVALFRSNMIAISSCESIDQLMTEVQNIGTSKAALYCHQLILKSAALSITNKSIEALRADAELAIPE.

Residues 78–256 (GIPHTFRKEL…RLWDCLIYEG (179 aa)) enclose the Rab-GAP TBC domain.

The chain is Growth hormone-regulated TBC protein 6 (tbc-6) from Caenorhabditis elegans.